An 81-amino-acid chain; its full sequence is Putative defensin-like protein 31 (81 aa).

Residues 1–26 (MTSSSKCLFFVFLCLAALLTPYLAEA) form the signal peptide. 3 disulfides stabilise this stretch: cysteine 38–cysteine 58, cysteine 44–cysteine 70, and cysteine 48–cysteine 72.

Belongs to the DEFL family.

It is found in the secreted. The polypeptide is Putative defensin-like protein 31 (Arabidopsis thaliana (Mouse-ear cress)).